We begin with the raw amino-acid sequence, 344 residues long: Anthranilate phosphoribosyltransferase (344 aa).

Residues Gly85, Gly88 to Asp89, Thr93, Asn95 to Thr98, Lys113 to Ser121, and Ser125 each bind 5-phospho-alpha-D-ribose 1-diphosphate. An anthranilate-binding site is contributed by Gly85. Residue Ser97 participates in Mg(2+) binding. Arg171 contacts anthranilate. Mg(2+)-binding residues include Asp230 and Glu231.

Belongs to the anthranilate phosphoribosyltransferase family. Homodimer. It depends on Mg(2+) as a cofactor.

The enzyme catalyses N-(5-phospho-beta-D-ribosyl)anthranilate + diphosphate = 5-phospho-alpha-D-ribose 1-diphosphate + anthranilate. It functions in the pathway amino-acid biosynthesis; L-tryptophan biosynthesis; L-tryptophan from chorismate: step 2/5. Its function is as follows. Catalyzes the transfer of the phosphoribosyl group of 5-phosphorylribose-1-pyrophosphate (PRPP) to anthranilate to yield N-(5'-phosphoribosyl)-anthranilate (PRA). The protein is Anthranilate phosphoribosyltransferase of Acidovorax ebreus (strain TPSY) (Diaphorobacter sp. (strain TPSY)).